Consider the following 157-residue polypeptide: Probable Brix domain-containing ribosomal biogenesis protein (157 aa).

One can recognise a Brix domain in the interval 1-157 (MLVTTSRKPS…KFNIKGFKKY (157 aa)).

Probably involved in the biogenesis of the ribosome. The protein is Probable Brix domain-containing ribosomal biogenesis protein of Methanosarcina mazei (strain ATCC BAA-159 / DSM 3647 / Goe1 / Go1 / JCM 11833 / OCM 88) (Methanosarcina frisia).